Reading from the N-terminus, the 333-residue chain is 6-phosphogluconolactonase (333 aa).

This sequence belongs to the cycloisomerase 2 family.

It carries out the reaction 6-phospho-D-glucono-1,5-lactone + H2O = 6-phospho-D-gluconate + H(+). The protein operates within carbohydrate degradation; pentose phosphate pathway; D-ribulose 5-phosphate from D-glucose 6-phosphate (oxidative stage): step 2/3. Functionally, catalyzes the hydrolysis of 6-phosphogluconolactone to 6-phosphogluconate. The sequence is that of 6-phosphogluconolactonase from Buchnera aphidicola subsp. Schizaphis graminum (strain Sg).